We begin with the raw amino-acid sequence, 253 residues long: Tryptophan synthase alpha chain (253 aa).

Catalysis depends on proton acceptor residues Glu45 and Asp56.

The protein belongs to the TrpA family. As to quaternary structure, tetramer of two alpha and two beta chains.

The enzyme catalyses (1S,2R)-1-C-(indol-3-yl)glycerol 3-phosphate + L-serine = D-glyceraldehyde 3-phosphate + L-tryptophan + H2O. It functions in the pathway amino-acid biosynthesis; L-tryptophan biosynthesis; L-tryptophan from chorismate: step 5/5. Functionally, the alpha subunit is responsible for the aldol cleavage of indoleglycerol phosphate to indole and glyceraldehyde 3-phosphate. The sequence is that of Tryptophan synthase alpha chain from Flavobacterium johnsoniae (strain ATCC 17061 / DSM 2064 / JCM 8514 / BCRC 14874 / CCUG 350202 / NBRC 14942 / NCIMB 11054 / UW101) (Cytophaga johnsonae).